Reading from the N-terminus, the 880-residue chain is Protein translocase subunit SecA (880 aa).

Residues Q86, 104–108, and D511 each bind ATP; that span reads GEGKT. Residues 837–871 form a disordered region; it reads AQKIQRSDGDGARRPVEKPKKIGRNDPCPCGSGKK. Residues 841–860 are compositionally biased toward basic and acidic residues; it reads QRSDGDGARRPVEKPKKIGR. Residues C864, C866, C875, and C876 each coordinate Zn(2+).

The protein belongs to the SecA family. In terms of assembly, monomer and homodimer. Part of the essential Sec protein translocation apparatus which comprises SecA, SecYEG and auxiliary proteins SecDF. Other proteins may also be involved. Zn(2+) serves as cofactor.

The protein localises to the cell inner membrane. Its subcellular location is the cytoplasm. The enzyme catalyses ATP + H2O + cellular proteinSide 1 = ADP + phosphate + cellular proteinSide 2.. Its function is as follows. Part of the Sec protein translocase complex. Interacts with the SecYEG preprotein conducting channel. Has a central role in coupling the hydrolysis of ATP to the transfer of proteins into and across the cell membrane, serving as an ATP-driven molecular motor driving the stepwise translocation of polypeptide chains across the membrane. The protein is Protein translocase subunit SecA of Thermodesulfovibrio yellowstonii (strain ATCC 51303 / DSM 11347 / YP87).